Here is a 1351-residue protein sequence, read N- to C-terminus: Non-structural polyprotein 1AB (1351 aa).

Residues 105-144 (LVQDHKAKTREVEDLKSQLSQLRMEHEILRHEYERLKLKS) are a coiled coil. Transmembrane regions (helical) follow at residues 153–173 (LKVL…TNGA), 231–251 (LVFQ…VYYM), 257–277 (PIVM…LLAV), 304–324 (ISIL…TFMA), and 337–357 (VVFA…PPWV). Residues H452, D481, and S544 each act as charge relay system; for serine protease activity in the active site. Residues 579 to 635 (EVRKISKREQELEDRVKQLEGMLNMDQAYVDSNLIVDLVREAVQREMKVLRTELANL) are a coiled coil. Y662 is modified (O-(5'-phospho-RNA)-tyrosine). A compositionally biased stretch (acidic residues) spans 687–699 (YDDEDEQSEEEAG). Disordered stretches follow at residues 687-708 (YDDE…DPGD) and 822-842 (RKRV…GPEE). Basic residues predominate over residues 822-832 (RKRVQQPKKLQ). The segment covering 833 to 842 (RGPEDPGPEE) has biased composition (basic and acidic residues). The region spanning 1085-1217 (PYWIEFDWTR…TSPSVPNDYV (133 aa)) is the RdRp catalytic domain.

This sequence belongs to the astroviridae polyprotein 1AB family. As to quaternary structure, monomer. Cleaved by the viral and host proteases. The protease is probably autocatalytically cleaved.

It localises to the host membrane. The enzyme catalyses RNA(n) + a ribonucleoside 5'-triphosphate = RNA(n+1) + diphosphate. Its function is as follows. Responsible for the cleavage of the polyprotein into functional products. Functionally, protein covalently attached to the 5' extremity of the genomic and subgenomic RNAs. It may serve as a primer for the replicase. The chain is Non-structural polyprotein 1AB (ORF1) from Ovis aries (Sheep).